Reading from the N-terminus, the 504-residue chain is ATP synthase subunit alpha (504 aa).

170–177 contacts ATP; the sequence is GDRQTGKT.

The protein belongs to the ATPase alpha/beta chains family. As to quaternary structure, F-type ATPases have 2 components, CF(1) - the catalytic core - and CF(0) - the membrane proton channel. CF(1) has five subunits: alpha(3), beta(3), gamma(1), delta(1), epsilon(1). CF(0) has four main subunits: a(1), b(1), b'(1) and c(9-12).

It is found in the cellular thylakoid membrane. The enzyme catalyses ATP + H2O + 4 H(+)(in) = ADP + phosphate + 5 H(+)(out). Its function is as follows. Produces ATP from ADP in the presence of a proton gradient across the membrane. The alpha chain is a regulatory subunit. The protein is ATP synthase subunit alpha of Prochlorococcus marinus (strain NATL2A).